Consider the following 329-residue polypeptide: DNA-directed RNA polymerase subunit alpha (329 aa).

An alpha N-terminal domain (alpha-NTD) region spans residues methionine 1–arginine 235. The segment at phenylalanine 249–aspartate 329 is alpha C-terminal domain (alpha-CTD).

The protein belongs to the RNA polymerase alpha chain family. Homodimer. The RNAP catalytic core consists of 2 alpha, 1 beta, 1 beta' and 1 omega subunit. When a sigma factor is associated with the core the holoenzyme is formed, which can initiate transcription.

It catalyses the reaction RNA(n) + a ribonucleoside 5'-triphosphate = RNA(n+1) + diphosphate. Functionally, DNA-dependent RNA polymerase catalyzes the transcription of DNA into RNA using the four ribonucleoside triphosphates as substrates. This is DNA-directed RNA polymerase subunit alpha from Aliivibrio fischeri (strain ATCC 700601 / ES114) (Vibrio fischeri).